Consider the following 351-residue polypeptide: Fe-S cluster assembly protein DRE2 (351 aa).

The N-terminal SAM-like domain stretch occupies residues 1–151; sequence MATTGRVLLL…KPDIGAQQAI (151 aa). Disordered regions lie at residues 93–118 and 157–186; these read RNRE…RYND and RRRK…PSSN. Polar residues-rich tracts occupy residues 105 to 114 and 167 to 186; these read GNGSNANSSR and TLAS…PSSN. Residues 152-243 form a linker region; the sequence is PLKLSRRRKE…EDELLDEDDM (92 aa). Residues Cys-253, Cys-264, Cys-267, and Cys-269 each coordinate [2Fe-2S] cluster. The segment at 253–269 is fe-S binding site A; the sequence is CRPKPGKRRRACKDCSC. Positions 314, 317, 325, and 328 each coordinate [4Fe-4S] cluster. 2 consecutive short sequence motifs (cx2C motif) follow at residues 314–317 and 325–328; these read CGNC and CDGC. Residues 314–328 are fe-S binding site B; it reads CGNCSLGDAFRCDGC.

It belongs to the anamorsin family. In terms of assembly, monomer. Interacts with TAH18. Interacts with MIA40. Requires [2Fe-2S] cluster as cofactor. [4Fe-4S] cluster serves as cofactor.

It is found in the cytoplasm. Its subcellular location is the mitochondrion intermembrane space. Functionally, component of the cytosolic iron-sulfur (Fe-S) protein assembly (CIA) machinery required for the maturation of extramitochondrial Fe-S proteins. Part of an electron transfer chain functioning in an early step of cytosolic Fe-S biogenesis, facilitating the de novo assembly of a [4Fe-4S] cluster on the scaffold complex CFD1-NBP35. Electrons are transferred to DRE2 from NADPH via the FAD- and FMN-containing protein TAH18. TAH18-DRE2 are also required for the assembly of the diferric tyrosyl radical cofactor of ribonucleotide reductase (RNR), probably by providing electrons for reduction during radical cofactor maturation in the catalytic small subunit RNR2. This chain is Fe-S cluster assembly protein DRE2, found in Ajellomyces capsulatus (strain NAm1 / WU24) (Darling's disease fungus).